The sequence spans 550 residues: Hydroxylamine reductase (550 aa).

Positions 3, 6, 18, and 25 each coordinate [2Fe-2S] cluster. The hybrid [4Fe-2O-2S] cluster site is built by His249, Glu273, Cys317, Cys405, Cys433, Cys458, Glu492, and Lys494. Cys405 is modified (cysteine persulfide).

It belongs to the HCP family. The cofactor is [2Fe-2S] cluster. It depends on hybrid [4Fe-2O-2S] cluster as a cofactor.

The protein localises to the cytoplasm. The catalysed reaction is A + NH4(+) + H2O = hydroxylamine + AH2 + H(+). Its function is as follows. Catalyzes the reduction of hydroxylamine to form NH(3) and H(2)O. This chain is Hydroxylamine reductase, found in Escherichia coli O6:K15:H31 (strain 536 / UPEC).